The following is a 312-amino-acid chain: Protoheme IX farnesyltransferase (312 aa).

Residues 1–36 (MNKSNTAIDPTNVIEAGPDSSVADVQQKSWKDYLVL) are Cytoplasmic-facing. The helical transmembrane segment at 37–55 (AKQGIVTSNLITTFAGIYL) threads the bilayer. At 56–69 (AIVYTGTVFTMHLD) the chain is on the extracellular side. The helical transmembrane segment at 70-88 (TMIFALLGAALVMAGGCTL) threads the bilayer. The Cytoplasmic portion of the chain corresponds to 89–110 (NNYIDRDIDHLMERTKERPTVT). Residues 111 to 129 (GRFSAKHVLLVGLAQAALG) traverse the membrane as a helical segment. Residues 130-138 (IIFLALTTP) are Extracellular-facing. The chain crosses the membrane as a helical span at residues 139 to 157 (TAAVIGLIGLFIYVVLYTM). Residues 158–228 (WTKRTTTLNT…YRAAGIPMLP (71 aa)) are Cytoplasmic-facing. The helical transmembrane segment at 229 to 247 (VVAGFEMTKRQMVVYVAAL) threads the bilayer. The Extracellular portion of the chain corresponds to 248-259 (LPVSLMLYPFGL). Residues 260–275 (VYTIVAAVLGVGWLAL) traverse the membrane as a helical segment. At 276–296 (GIAGFKMKDDIKWARLMFVYS) the chain is on the cytoplasmic side. A helical membrane pass occupies residues 297–307 (LNYLTILFVLM). Over 308–312 (VIVHF) the chain is Extracellular.

The protein belongs to the UbiA prenyltransferase family.

The protein resides in the cell membrane. It carries out the reaction heme b + (2E,6E)-farnesyl diphosphate + H2O = Fe(II)-heme o + diphosphate. It functions in the pathway porphyrin-containing compound metabolism; heme O biosynthesis; heme O from protoheme: step 1/1. Functionally, converts protoheme IX and farnesyl diphosphate to heme O. The protein is Protoheme IX farnesyltransferase (ctaB) of Alkalihalophilus pseudofirmus (strain ATCC BAA-2126 / JCM 17055 / OF4) (Bacillus pseudofirmus).